We begin with the raw amino-acid sequence, 316 residues long: Putative ring-cleaving dioxygenase MhqA (316 aa).

VOC domains are found at residues 5-131 (GIHH…LTAD) and 154-278 (GLGP…LSTD). Fe cation-binding residues include His8, His226, and Glu274.

Belongs to the extradiol ring-cleavage dioxygenase family. Fe(2+) is required as a cofactor.

It localises to the cytoplasm. In terms of biological role, putative ring-cleavage dioxygenase that may contribute to the degradation of aromatic compounds. The protein is Putative ring-cleaving dioxygenase MhqA (mhqA) of Bacillus subtilis (strain 168).